The chain runs to 100 residues: RxLR effector protein SFI8 (100 aa).

The signal sequence occupies residues 1–22 (MRSILYAVLAFAVLARSSAVAA). Residues 43–57 (RSLRVEAQEVIQSGR) carry the RxLR-dEER motif. Residues 78-82 (KPDIK) carry the Calmodulin-binding motif motif.

The protein belongs to the RxLR effector family. In terms of assembly, interacts with the host calmodulin.

The protein localises to the secreted. Its subcellular location is the host nucleus. It localises to the host cytoplasm. Its function is as follows. Effector that suppresses flg22-induced post-translational MAP kinase activation both tomato and Arabidopsis. The perception of highly conserved pathogen- or microbe-associated molecular patterns (PAMPs/MAMPs), such as flg22, triggers converging signaling pathways recruiting MAP kinase cascades and inducing transcriptional re-programming, yielding a generic antimicrobial response. Associates with calmodulin to interfere with plant defense-associated calcium signaling in hosts. The chain is RxLR effector protein SFI8 from Phytophthora infestans (strain T30-4) (Potato late blight agent).